Here is a 1223-residue protein sequence, read N- to C-terminus: DNA-directed RNA polymerase subunit beta'' (1223 aa).

C233, C307, C314, and C317 together coordinate Zn(2+).

The protein belongs to the RNA polymerase beta' chain family. RpoC2 subfamily. In terms of assembly, in plastids the minimal PEP RNA polymerase catalytic core is composed of four subunits: alpha, beta, beta', and beta''. When a (nuclear-encoded) sigma factor is associated with the core the holoenzyme is formed, which can initiate transcription. The cofactor is Zn(2+).

Its subcellular location is the plastid. The protein resides in the chloroplast. The enzyme catalyses RNA(n) + a ribonucleoside 5'-triphosphate = RNA(n+1) + diphosphate. Its function is as follows. DNA-dependent RNA polymerase catalyzes the transcription of DNA into RNA using the four ribonucleoside triphosphates as substrates. This Mesostigma viride (Green alga) protein is DNA-directed RNA polymerase subunit beta''.